The chain runs to 598 residues: Aspartate--tRNA ligase (598 aa).

E173 is a binding site for L-aspartate. The tract at residues 197 to 200 (QLFK) is aspartate. An L-aspartate-binding site is contributed by R219. ATP contacts are provided by residues 219 to 221 (RDE) and Q228. Residue H449 coordinates L-aspartate. E483 lines the ATP pocket. Residue R490 participates in L-aspartate binding. Residue 535-538 (GLDR) coordinates ATP.

Belongs to the class-II aminoacyl-tRNA synthetase family. Type 1 subfamily. As to quaternary structure, homodimer.

The protein localises to the cytoplasm. It catalyses the reaction tRNA(Asp) + L-aspartate + ATP = L-aspartyl-tRNA(Asp) + AMP + diphosphate. Functionally, catalyzes the attachment of L-aspartate to tRNA(Asp) in a two-step reaction: L-aspartate is first activated by ATP to form Asp-AMP and then transferred to the acceptor end of tRNA(Asp). The chain is Aspartate--tRNA ligase from Shewanella halifaxensis (strain HAW-EB4).